The chain runs to 245 residues: Leucyl/phenylalanyl-tRNA--protein transferase (245 aa).

This sequence belongs to the L/F-transferase family.

It localises to the cytoplasm. The catalysed reaction is N-terminal L-lysyl-[protein] + L-leucyl-tRNA(Leu) = N-terminal L-leucyl-L-lysyl-[protein] + tRNA(Leu) + H(+). It carries out the reaction N-terminal L-arginyl-[protein] + L-leucyl-tRNA(Leu) = N-terminal L-leucyl-L-arginyl-[protein] + tRNA(Leu) + H(+). The enzyme catalyses L-phenylalanyl-tRNA(Phe) + an N-terminal L-alpha-aminoacyl-[protein] = an N-terminal L-phenylalanyl-L-alpha-aminoacyl-[protein] + tRNA(Phe). Functionally, functions in the N-end rule pathway of protein degradation where it conjugates Leu, Phe and, less efficiently, Met from aminoacyl-tRNAs to the N-termini of proteins containing an N-terminal arginine or lysine. This Paraburkholderia xenovorans (strain LB400) protein is Leucyl/phenylalanyl-tRNA--protein transferase.